The following is a 309-amino-acid chain: NADH-cytochrome b5 reductase 1 (309 aa).

Residues 29-49 (EFVPYAVALTAVLAGFKLFTG) form a helical membrane-spanning segment. One can recognise an FAD-binding FR-type domain in the interval 60-165 (TEFQEFVLKE…RGPKGAMVYT (106 aa)). Residues 145–160 (TTLK…GPKG) and 171–208 (HIGM…KVDL) each bind FAD.

Belongs to the flavoprotein pyridine nucleotide cytochrome reductase family. Monomer. Component of the 2-(3-amino-3-carboxypropyl)histidine synthase complex composed of dph1, dph2, dph3 and a NADH-dependent reductase, predominantly cbr1. The cofactor is FAD.

It is found in the mitochondrion outer membrane. It catalyses the reaction 2 Fe(III)-[cytochrome b5] + NADH = 2 Fe(II)-[cytochrome b5] + NAD(+) + H(+). The catalysed reaction is 2 Fe(3+)-[Dph3] + NADH = 2 Fe(2+)-[Dph3] + NAD(+) + H(+). It participates in protein modification; peptidyl-diphthamide biosynthesis. Its function is as follows. NADH-dependent reductase for dph3 and cytochrome b5. Required for the first step of diphthamide biosynthesis, a post-translational modification of histidine which occurs in elongation factor 2. Dph1 and dph2 transfer a 3-amino-3-carboxypropyl (ACP) group from S-adenosyl-L-methionine (SAM) to a histidine residue, the reaction is assisted by a reduction system comprising dph3 and a NADH-dependent reductase, predominantly cbr1. By reducing dph3, also involved in the formation of the tRNA wobble base modification mcm5s 2U (5-methoxycarbonylmethyl-2-thiouridine), mediated by the elongator complex. The cytochrome b5/NADH cytochrome b5 reductase electron transfer system supports the catalytic activity of several sterol biosynthetic enzymes. In Aspergillus clavatus (strain ATCC 1007 / CBS 513.65 / DSM 816 / NCTC 3887 / NRRL 1 / QM 1276 / 107), this protein is NADH-cytochrome b5 reductase 1 (cbr1).